The following is a 551-amino-acid chain: Sialic acid-binding Ig-like lectin 5 (551 aa).

The signal sequence occupies residues Met-1–Gln-16. The Extracellular segment spans residues Glu-17 to Leu-441. One can recognise an Ig-like V-type domain in the interval Pro-19–Asn-136. Disulfide bonds link Cys-36–Cys-170, Cys-41–Cys-101, and Cys-164–Cys-213. N-linked (GlcNAc...) asparagine glycosylation occurs at Asn-100. N-acetylneuraminate contacts are provided by Arg-119, Lys-127, and Ser-129. In terms of domain architecture, Ig-like C2-type 1 spans Pro-146 to Gln-229. The segment at Asp-189–Asn-210 is disordered. N-linked (GlcNAc...) asparagine glycans are attached at residues Asn-210, Asn-231, and Asn-253. Residues Pro-236–Ser-330 form the Ig-like C2-type 2 domain. Cys-269 and Cys-314 are disulfide-bonded. Residues Asn-328, Asn-375, Asn-384, and Asn-393 are each glycosylated (N-linked (GlcNAc...) asparagine). The chain crosses the membrane as a helical span at residues Gly-442–Val-462. Residues Lys-463 to Lys-551 are Cytoplasmic-facing. The interval Ala-469 to Lys-551 is disordered. Residues Leu-518–Leu-523 carry the ITIM motif motif. Basic and acidic residues predominate over residues Met-528 to Glu-537. The short motif at Thr-542–Ile-547 is the SLAM-like motif element.

The protein belongs to the immunoglobulin superfamily. SIGLEC (sialic acid binding Ig-like lectin) family. As to expression, expressed by monocytic/myeloid lineage cells. Found at high levels in peripheral blood leukocytes, spleen, bone marrow and at lower levels in lymph node, lung, appendix, placenta, pancreas and thymus. Expressed by monocytes and neutrophils but absent from leukemic cell lines representing early stages of myelomonocytic differentiation.

The protein localises to the membrane. Functionally, putative adhesion molecule that mediates sialic-acid dependent binding to cells. Binds equally to alpha-2,3-linked and alpha-2,6-linked sialic acid. The sialic acid recognition site may be masked by cis interactions with sialic acids on the same cell surface. In Homo sapiens (Human), this protein is Sialic acid-binding Ig-like lectin 5 (SIGLEC5).